A 470-amino-acid polypeptide reads, in one-letter code: Pheromone a factor receptor (470 aa).

The Extracellular segment spans residues 1 to 5 (MSYKS). The chain crosses the membrane as a helical span at residues 6–23 (AIIGLCLLAVILLAPPLA). The Cytoplasmic portion of the chain corresponds to 24-29 (WHSHTK). Residues 30 to 53 (NIPAIILITWLLTMNLTCIVDAAI) form a helical membrane-spanning segment. Residues 54–70 (WSDDDFLTRWDGKGWCD) are Extracellular-facing. The helical transmembrane segment at 71 to 98 (IVIKLQVGANIGISCAVTNIIYNLHTIL) threads the bilayer. The Cytoplasmic segment spans residues 99–116 (KADSVLPDLSSWTKIVKD). The helical transmembrane segment at 117–134 (LVISLFTPVMVMGFSYLL) threads the bilayer. Over 135–155 (QVFRYGIARYNGCQNLLSPTW) the chain is Extracellular. A helical membrane pass occupies residues 156 to 183 (ITTVLYTMWMLIWSFVGAVYATLVLFVF). The Cytoplasmic portion of the chain corresponds to 184 to 205 (YKKRKDVRDILHCTNSGLNLTR). Residues 206–228 (FARLLIFCFIIILVMFPFSVYTF) form a helical membrane-spanning segment. The Extracellular portion of the chain corresponds to 229–266 (VQDLQQVEGHYTFKNTHSSTIWNTIIKFDPGRPIYNIW). A helical membrane pass occupies residues 267 to 285 (LYVLMSYLVFLIFGLGSDA). The Cytoplasmic segment spans residues 286-470 (LHMYSKFLRS…EHSSENTAGP (185 aa)). The interval 300 to 470 (FVLDMWKRFI…EHSSENTAGP (171 aa)) is hydrophilic. The segment at 440 to 470 (NFEGESLCYSPASKEENSSSNEHSSENTAGP) is disordered.

The protein belongs to the G-protein coupled receptor 4 family.

It localises to the membrane. Receptor for the peptide pheromone a factor. The sequence is that of Pheromone a factor receptor (STE3) from Saccharomyces cerevisiae (strain ATCC 204508 / S288c) (Baker's yeast).